Consider the following 364-residue polypeptide: tRNA N6-adenosine threonylcarbamoyltransferase (364 aa).

Residues H118 and H122 each contribute to the Fe cation site. Residues L140–G144, D173, G186, and N288 contribute to the substrate site. Residue D316 coordinates Fe cation.

Belongs to the KAE1 / TsaD family. It depends on Fe(2+) as a cofactor.

It is found in the cytoplasm. It catalyses the reaction L-threonylcarbamoyladenylate + adenosine(37) in tRNA = N(6)-L-threonylcarbamoyladenosine(37) in tRNA + AMP + H(+). Its function is as follows. Required for the formation of a threonylcarbamoyl group on adenosine at position 37 (t(6)A37) in tRNAs that read codons beginning with adenine. Is involved in the transfer of the threonylcarbamoyl moiety of threonylcarbamoyl-AMP (TC-AMP) to the N6 group of A37, together with TsaE and TsaB. TsaD likely plays a direct catalytic role in this reaction. The sequence is that of tRNA N6-adenosine threonylcarbamoyltransferase from Cereibacter sphaeroides (strain ATCC 17023 / DSM 158 / JCM 6121 / CCUG 31486 / LMG 2827 / NBRC 12203 / NCIMB 8253 / ATH 2.4.1.) (Rhodobacter sphaeroides).